A 182-amino-acid polypeptide reads, in one-letter code: Ribosome maturation factor RimM (182 aa).

Positions 103–182 (EGDYYWKDLM…TIEVDWDPGF (80 aa)) constitute a PRC barrel domain.

The protein belongs to the RimM family. As to quaternary structure, binds ribosomal protein uS19.

It is found in the cytoplasm. Its function is as follows. An accessory protein needed during the final step in the assembly of 30S ribosomal subunit, possibly for assembly of the head region. Essential for efficient processing of 16S rRNA. May be needed both before and after RbfA during the maturation of 16S rRNA. It has affinity for free ribosomal 30S subunits but not for 70S ribosomes. The protein is Ribosome maturation factor RimM of Klebsiella pneumoniae subsp. pneumoniae (strain ATCC 700721 / MGH 78578).